The primary structure comprises 69 residues: MAKIKGQVKWFNESKGFGFITPADGSKDVFVHFSAIQGNGLKTLAEGQNVEFEIQDGQKGPAAVNVTAI.

A CSD domain is found at 6–66 (GQVKWFNESK…GQKGPAAVNV (61 aa)).

It is found in the cytoplasm. The polypeptide is Cold shock-like protein CspC (cspC) (Shigella flexneri).